We begin with the raw amino-acid sequence, 546 residues long: MAAKDVVFGDSARSKMVEGVNILANAVKVTLGPKGRNVVLERSFGGPTVTKDGVSVAKEIELKDKLQNMGAQMVKEVASKTSDNAGDGTTTATVLAQSIVREGMKYVASGMNPMDLKRGIDKAVAAAVEELKKISKPCTTNKEIAQVGSISANSDSSIGDRIAEAMDKVGKEGVITVEDGKSLADELDVVEGMQFDRGYLSPYFINNPDKQVAVLDNPFVLLHDKKVSNIRDLLPVLEQVAKAGRPLLIIAEDVEGEALATLVVNNIRGILKTVAVKAPGFGDRRKAMLEDIAILTGGQVIAEETGLTLEKATLAELGQAKRIEVGKENTTIIDGAGEAASIEARVKQVRAQIEEATSDYDREKLQERVAKLAGGVAVIKVGAATEVEMKEKKARVEDALHATRAAVEEGIVAGGGVALIRARTAIAGLTGANADQNAGIKIVLRAMEEPLRQIVTNGGEEASVVVAAVAAGKGNYGYNAATGEYVDMVEAGVVDPTKVTRTALQNAASVAGLLLTTDAAVAELPKEDAPMPGGMPGGMGGMGMDM.

ATP is bound by residues Thr-30–Pro-33, Lys-51, Asp-87–Thr-91, Gly-415, Asn-479–Ala-481, and Asp-495. Positions Lys-526–Met-546 are disordered. The span at Gly-534–Met-546 shows a compositional bias: gly residues.

Belongs to the chaperonin (HSP60) family. Forms a cylinder of 14 subunits composed of two heptameric rings stacked back-to-back. Interacts with the co-chaperonin GroES.

The protein localises to the cytoplasm. It catalyses the reaction ATP + H2O + a folded polypeptide = ADP + phosphate + an unfolded polypeptide.. Functionally, together with its co-chaperonin GroES, plays an essential role in assisting protein folding. The GroEL-GroES system forms a nano-cage that allows encapsulation of the non-native substrate proteins and provides a physical environment optimized to promote and accelerate protein folding. The polypeptide is Chaperonin GroEL (Burkholderia cepacia (Pseudomonas cepacia)).